Here is a 327-residue protein sequence, read N- to C-terminus: Methionyl-tRNA formyltransferase (327 aa).

Residue 122 to 125 (SLLP) participates in (6S)-5,6,7,8-tetrahydrofolate binding.

It belongs to the Fmt family.

It carries out the reaction L-methionyl-tRNA(fMet) + (6R)-10-formyltetrahydrofolate = N-formyl-L-methionyl-tRNA(fMet) + (6S)-5,6,7,8-tetrahydrofolate + H(+). Attaches a formyl group to the free amino group of methionyl-tRNA(fMet). The formyl group appears to play a dual role in the initiator identity of N-formylmethionyl-tRNA by promoting its recognition by IF2 and preventing the misappropriation of this tRNA by the elongation apparatus. This Ralstonia nicotianae (strain ATCC BAA-1114 / GMI1000) (Ralstonia solanacearum) protein is Methionyl-tRNA formyltransferase.